A 268-amino-acid polypeptide reads, in one-letter code: Tryptophan synthase alpha chain (268 aa).

Active-site proton acceptor residues include Glu-49 and Asp-60.

This sequence belongs to the TrpA family. Tetramer of two alpha and two beta chains.

It carries out the reaction (1S,2R)-1-C-(indol-3-yl)glycerol 3-phosphate + L-serine = D-glyceraldehyde 3-phosphate + L-tryptophan + H2O. The protein operates within amino-acid biosynthesis; L-tryptophan biosynthesis; L-tryptophan from chorismate: step 5/5. Functionally, the alpha subunit is responsible for the aldol cleavage of indoleglycerol phosphate to indole and glyceraldehyde 3-phosphate. The chain is Tryptophan synthase alpha chain from Yersinia pseudotuberculosis serotype O:1b (strain IP 31758).